The chain runs to 256 residues: Thiazole synthase (256 aa).

K95 acts as the Schiff-base intermediate with DXP in catalysis. Residues G156, 182–183, and 204–205 contribute to the 1-deoxy-D-xylulose 5-phosphate site; these read AG and NT.

Belongs to the ThiG family. As to quaternary structure, homotetramer. Forms heterodimers with either ThiH or ThiS.

The protein localises to the cytoplasm. It catalyses the reaction [ThiS sulfur-carrier protein]-C-terminal-Gly-aminoethanethioate + 2-iminoacetate + 1-deoxy-D-xylulose 5-phosphate = [ThiS sulfur-carrier protein]-C-terminal Gly-Gly + 2-[(2R,5Z)-2-carboxy-4-methylthiazol-5(2H)-ylidene]ethyl phosphate + 2 H2O + H(+). It participates in cofactor biosynthesis; thiamine diphosphate biosynthesis. Functionally, catalyzes the rearrangement of 1-deoxy-D-xylulose 5-phosphate (DXP) to produce the thiazole phosphate moiety of thiamine. Sulfur is provided by the thiocarboxylate moiety of the carrier protein ThiS. In vitro, sulfur can be provided by H(2)S. This Escherichia coli O81 (strain ED1a) protein is Thiazole synthase.